We begin with the raw amino-acid sequence, 472 residues long: Mothers against decapentaplegic homolog 1 (472 aa).

The 125-residue stretch at 12 to 136 (PAVKRLLGWK…YKRVDSPVLP (125 aa)) folds into the MH1 domain. Positions 64, 109, 121, and 126 each coordinate Zn(2+). Residues 158 to 238 (NPLHQTEPPM…PPPAYMPPEE (81 aa)) form a disordered region. The span at 169–182 (QNATFPDSFPQQPA) shows a compositional bias: polar residues. Residues 188–226 (TPNSPTNSYPSSPNSGTGSTATFPHSPSSSDPGSPFQMP) show a composition bias toward low complexity. Over residues 227–238 (ETPPPAYMPPEE) the composition is skewed to pro residues. The MH2 domain maps to 278–472 (WCSIVYYELN…SPHNPISSVS (195 aa)).

It belongs to the dwarfin/SMAD family. In terms of assembly, may form trimers with another Smad1 and the co-Smad Smad4.

It localises to the cytoplasm. The protein localises to the nucleus. In terms of biological role, involved in ventralization. May mediate Bmp2b signaling during embryonic dorsal-ventral pattern formation, and may itself be a transcriptional target for Smad5-mediated Bmp2b signaling. The chain is Mothers against decapentaplegic homolog 1 (smad1) from Danio rerio (Zebrafish).